We begin with the raw amino-acid sequence, 461 residues long: Piperine synthase (461 aa).

Active-site proton acceptor residues include His168 and Asp387. The Microbody targeting signal signature appears at 459-461 (SRM).

This sequence belongs to the plant acyltransferase family. As to quaternary structure, monomer. In terms of tissue distribution, confined to immature fruits perisperm. Also detectable in roots.

It is found in the cytoplasm. The enzyme catalyses piperidine + (E,E)-piperoyl-CoA = piperine + CoA + H(+). It carries out the reaction pyrrolidine + (E,E)-piperoyl-CoA = piperyline + CoA + H(+). The catalysed reaction is (E,E)-piperoyl-CoA + 2-methylpropan-1-amine = (E,E)-piperlonguminine + CoA + H(+). The protein operates within aromatic compound metabolism. In terms of biological role, involved in the biosynthesis of aromatic piperamides natural products such as piperine (1-piperoyl-piperidine), the pungent principle contributing, together with several terpenoids, to the aromatic properties of black pepper fruits, and displaying numerous pharmacological activities such as antiproliferative, antitumor, antiangiogenesis, antioxidant, antidiabetic, antiobesity, cardioprotective, antimicrobial, antiaging, and immunomodulatory effects. Mediates mainly the conversion of piperidine and piperoyl-CoA to piperine. Can also use pyrrolidine and isobutylamine as acceptors and 3,4-methylenedioxycinnamoyl-CoA as an alternative CoA-donor with a lower efficiency. The chain is Piperine synthase from Piper nigrum (Black pepper).